A 145-amino-acid chain; its full sequence is Protein BUD31 homolog 3 (145 aa).

Belongs to the BUD31 (G10) family.

The protein localises to the nucleus. The sequence is that of Protein BUD31 homolog 3 from Oryza sativa subsp. japonica (Rice).